A 94-amino-acid polypeptide reads, in one-letter code: Putative pterin-4-alpha-carbinolamine dehydratase (94 aa).

This sequence belongs to the pterin-4-alpha-carbinolamine dehydratase family.

The catalysed reaction is (4aS,6R)-4a-hydroxy-L-erythro-5,6,7,8-tetrahydrobiopterin = (6R)-L-erythro-6,7-dihydrobiopterin + H2O. The polypeptide is Putative pterin-4-alpha-carbinolamine dehydratase (Koribacter versatilis (strain Ellin345)).